Here is a 305-residue protein sequence, read N- to C-terminus: tRNA pseudouridine synthase B (305 aa).

Residue D39 is the Nucleophile of the active site.

The protein belongs to the pseudouridine synthase TruB family. Type 1 subfamily.

The catalysed reaction is uridine(55) in tRNA = pseudouridine(55) in tRNA. Its function is as follows. Responsible for synthesis of pseudouridine from uracil-55 in the psi GC loop of transfer RNAs. The polypeptide is tRNA pseudouridine synthase B (Staphylococcus aureus (strain Mu50 / ATCC 700699)).